The sequence spans 144 residues: Large ribosomal subunit protein uL15 (144 aa).

Residues 1–57 (MRFNELQPAKGSRFAGKRLGRGIGSGLGKTSGKGHKGQKARSGGYHKVGFEGGQMPL) are disordered. Residues 21-31 (RGIGSGLGKTS) are compositionally biased toward gly residues.

It belongs to the universal ribosomal protein uL15 family. As to quaternary structure, part of the 50S ribosomal subunit.

Functionally, binds to the 23S rRNA. In Dichelobacter nodosus (strain VCS1703A), this protein is Large ribosomal subunit protein uL15.